Reading from the N-terminus, the 282-residue chain is NH(3)-dependent NAD(+) synthetase (282 aa).

G51–S58 is an ATP binding site. D57 contributes to the Mg(2+) binding site. A deamido-NAD(+)-binding site is contributed by R148. T168 contributes to the ATP binding site. E173 provides a ligand contact to Mg(2+). K181 and D188 together coordinate deamido-NAD(+). 2 residues coordinate ATP: K197 and T219. H268–K269 contacts deamido-NAD(+).

It belongs to the NAD synthetase family. As to quaternary structure, homodimer.

It carries out the reaction deamido-NAD(+) + NH4(+) + ATP = AMP + diphosphate + NAD(+) + H(+). It participates in cofactor biosynthesis; NAD(+) biosynthesis; NAD(+) from deamido-NAD(+) (ammonia route): step 1/1. Catalyzes the ATP-dependent amidation of deamido-NAD to form NAD. Uses ammonia as a nitrogen source. The protein is NH(3)-dependent NAD(+) synthetase of Burkholderia cenocepacia (strain HI2424).